The sequence spans 1984 residues: Sodium channel protein type 9 subunit alpha (1984 aa).

The Cytoplasmic portion of the chain corresponds to 1 to 125 (MAMLPPPGPQ…RRISIKILVH (125 aa)). The segment covering 26-47 (RIAEGKTKEPKEEKKDDHDEGP) has biased composition (basic and acidic residues). The disordered stretch occupies residues 26–55 (RIAEGKTKEPKEEKKDDHDEGPKPSSDLEA). One copy of the I repeat lies at 112 to 408 (FSPLRRISIK…VAMAYEEQNQ (297 aa)). Residues 126 to 145 (SLFSMLIMCTILTNCIFMTM) traverse the membrane as a helical segment. Residues 146-150 (NNPAE) are Extracellular-facing. Residues 151-172 (WTKNVEYTFTGIYTFESLVKIF) traverse the membrane as a helical segment. Topologically, residues 173-185 (ARGFCVGEFTFLR) are cytoplasmic. Residues 186 to 204 (DPWNWLDFIVIVFAYLTEF) form a helical membrane-spanning segment. Topologically, residues 205-210 (VNLGNV) are extracellular. N-linked (GlcNAc...) asparagine glycosylation is present at Asn-209. The helical transmembrane segment at 211–227 (SALRTFRVLRALKTISV) threads the bilayer. Topologically, residues 228–241 (IPGLKTIVGALIQS) are cytoplasmic. A helical transmembrane segment spans residues 242 to 267 (VKKLSDVIILTVFCLSVFALIGLQLF). Residues 268-344 (MGHLKHKCLR…PDYGYTSFDT (77 aa)) lie on the Extracellular side of the membrane. A disulfide bond links Cys-275 and Cys-322. Asn-281 is a glycosylation site (N-linked (GlcNAc...) asparagine). The pore-forming intramembrane region spans 345–361 (FSWAFLALFRLMTQDYW). The Extracellular segment spans residues 362-374 (ENLYQQTLRAAGK). The chain crosses the membrane as a helical span at residues 375-400 (TYMIFFVVVIFLGSFYLINLILAVVA). At 401–742 (MAYEEQNQAN…FIYIIVMDPF (342 aa)) the chain is on the cytoplasmic side. The span at 459–469 (SSSETSKLSSK) shows a compositional bias: low complexity. 2 disordered regions span residues 459–517 (SSSE…LGVE) and 563–610 (GSET…PPML). Basic residues predominate over residues 472–484 (KERRNRRKKKNQK). Basic and acidic residues-rich tracts occupy residues 487 to 508 (SSGE…ESIS) and 571 to 583 (DEHS…ESRR). The II repeat unit spans residues 723 to 986 (CSPFWIKFKK…EEDTDANNLQ (264 aa)). Residues 743 to 759 (VDLAITICIVLNTLFMA) traverse the membrane as a helical segment. The Extracellular portion of the chain corresponds to 760–768 (MEHHPMTEE). The helical transmembrane segment at 769-793 (FKNVLVVGNLVFTGIFAAEMVLKLI) threads the bilayer. The Cytoplasmic segment spans residues 794-802 (AMDPYEYFQ). Residues 803-819 (VGWNVFDSLIVTLSLVE) traverse the membrane as a helical segment. At 820 to 828 (LFLADVEGL) the chain is on the extracellular side. A helical membrane pass occupies residues 829–845 (SVLRSFRLLRVFKLAKS). The Cytoplasmic segment spans residues 846 to 862 (WPTLNMLIKIIGNSVGP). The chain crosses the membrane as a helical span at residues 863-885 (LGNLTLVLAIIVFIFAVVGMQLF). Over 886 to 912 (GKSYKECVCKINDDCSLPRWHMNDFFH) the chain is Extracellular. An intrachain disulfide couples Cys-894 to Cys-900. Residues 913–925 (SFLIVFRVLCGEW) constitute an intramembrane region (pore-forming). Over 926–937 (IETMWDCMEVAG) the chain is Extracellular. A disulfide bridge connects residues Cys-932 and Cys-941. A helical membrane pass occupies residues 938 to 964 (QAMCLIVYMMVMVIGNLVVLNLFLALL). At 965–1184 (LSSFSSDNLS…WWNIRKTCYR (220 aa)) the chain is on the cytoplasmic side. Residues 1087–1146 (PIAPGESDLENMNTEELSSDSESEYSKERLNRSSSSECSTVDNALPGEGEEAEAEPVNSD) form a disordered region. Over residues 1118–1128 (RSSSSECSTVD) the composition is skewed to polar residues. Residues 1134–1146 (EGEEAEAEPVNSD) are compositionally biased toward acidic residues. Residues 1177–1485 (NIRKTCYRIV…KKYYNAMKKL (309 aa)) form an III repeat. Residues 1185-1209 (IVEHSWFESFIVLMILLSSGALAFE) traverse the membrane as a helical segment. The Extracellular portion of the chain corresponds to 1210–1221 (DIYIEKKKTIKI). Residues 1222 to 1247 (ILEYADKIFTYIFILEMLLKWVAYGY) traverse the membrane as a helical segment. Topologically, residues 1248–1249 (KT) are cytoplasmic. Residues 1250 to 1275 (YFTNAWCWLDFLIVDVSLVTLVANTL) form a helical membrane-spanning segment. Residues 1276 to 1284 (GYSDLGPIK) lie on the Extracellular side of the membrane. The helical transmembrane segment at 1285–1301 (SLRTLRALRPLRALSRF) threads the bilayer. Topologically, residues 1302–1314 (EGMRVVVNALIGA) are cytoplasmic. Residues 1315–1339 (IPSIMNVLLVCLIFWLIFSIMGVNL) form a helical membrane-spanning segment. Residues 1340–1391 (FAGKFYQCVNTTDDSRFPTKQVSNRSECFALMNGSQNVRWKNLKVNFDNVGL) are Extracellular-facing. Cys-1347 and Cys-1367 are joined by a disulfide. Residues Asn-1349, Asn-1363, and Asn-1372 are each glycosylated (N-linked (GlcNAc...) asparagine). Residues 1392–1402 (RYLSLLQVATF) constitute an intramembrane region (pore-forming). The Extracellular segment spans residues 1403 to 1428 (KGWMDIMYAAVDSVNVDQQPSYEHNL). The chain crosses the membrane as a helical span at residues 1429 to 1454 (YMYIYFVIFIIFGSFFTLNLFIGVII). Over 1455–1511 (DNFNQQKKKLGGQDIFMTEEQKKYYNAMKKLGSKKPQKPIPRPGNKFQGCIFDLVTN) the chain is Cytoplasmic. Ser-1487 is subject to Phosphoserine; by PKC. One copy of the IV repeat lies at 1494-1792 (IPRPGNKFQG…WEKFDPDATQ (299 aa)). A helical membrane pass occupies residues 1512–1531 (QAFDITIMILICLNMVTMMV). Over 1532-1542 (EKEGQSDYMTD) the chain is Extracellular. The helical transmembrane segment at 1543–1564 (VLYWINVVFIILFTGECVLKLI) threads the bilayer. The Cytoplasmic segment spans residues 1565–1573 (SLRHYYFTI). The chain crosses the membrane as a helical span at residues 1574–1595 (GWNIFDFVVVILSIVGMFLAEL). At 1596-1604 (IETYFVSPT) the chain is on the extracellular side. The chain crosses the membrane as a helical span at residues 1605 to 1624 (LFRVIRLARIGRILRLIKGA). Residues 1625-1637 (KGIRTLLFALMMS) lie on the Cytoplasmic side of the membrane. The helical transmembrane segment at 1638–1660 (LPALFNIGLLLFLVMFIYAIFGM) threads the bilayer. Topologically, residues 1661-1683 (SNFAYVKKEAGINDMFNFETFGN) are extracellular. The segment at residues 1684 to 1696 (SMICLFQITTSAG) is an intramembrane region (pore-forming). Over 1697-1730 (WDGLLAPILNSAPPDCDPKKVHPGSSTEGDCGSP) the chain is Extracellular. Cys-1712 and Cys-1727 are oxidised to a cystine. A helical transmembrane segment spans residues 1731-1756 (SVGIFYFVSYIIISFLVVVNMYIAVI). At 1757 to 1984 (LENFSVATEE…KGKDGKETKK (228 aa)) the chain is on the cytoplasmic side. The IQ domain occupies 1886-1915 (EDVSATVIQRAYRRYRLRQNVKNISSIYIK). A disordered region spans residues 1924-1984 (PNKGDIVFDN…KGKDGKETKK (61 aa)). Residues 1933-1956 (NVNSSSPEKTDATASTISPPSYDS) show a composition bias toward polar residues. A compositionally biased stretch (basic and acidic residues) spans 1958–1984 (TKPDKEKYEKDKTEKEDKGKDGKETKK).

Belongs to the sodium channel (TC 1.A.1.10) family. Nav1.7/SCN9A subfamily. The Nav1.7 voltage-gated sodium channel consists of an ion-conducting alpha subunit SCN9A which is functional on its own regulated by one or more beta-1 (SCN1B), beta-2 (SCN2B), beta-3 (SCN3B) and beta-4 (SCN4B) subunits. SCN1B and SCN3B are non-covalently associated with SCN9A. SCN2B and SCN4B are disulfide-linked to SCN9A. SCN1B regulates channel inactivation. Interacts with NEDD4 and NEDD4L; regulates Nav1.7 activity most probably through ubiquitination and subsequent endocytosis. Interacts with TMEM233; modulates the gating properties of NaV1.7. In terms of processing, phosphorylation at Ser-1487 by PKC in a highly conserved cytoplasmic loop increases peak sodium currents. Ubiquitinated by NEDD4L; which may promote its endocytosis. As to expression, expressed in the sciatic nerve, spinal cord, brainstem, cerebellum and cortex, but not expressed in the lung, skeletal and cardiac muscles, kidney and liver.

It localises to the cell membrane. Its subcellular location is the cell projection. The protein localises to the neuron projection. The protein resides in the axon. The catalysed reaction is Na(+)(in) = Na(+)(out). In terms of biological role, pore-forming subunit of Nav1.7, a voltage-gated sodium (Nav) channel that directly mediates the depolarizing phase of action potentials in excitable membranes. Navs, also called VGSCs (voltage-gated sodium channels) or VDSCs (voltage-dependent sodium channels), operate by switching between closed and open conformations depending on the voltage difference across the membrane. In the open conformation they allow Na(+) ions to selectively pass through the pore, along their electrochemical gradient. The influx of Na(+) ions provokes membrane depolarization, initiating the propagation of electrical signals throughout cells and tissues. Nav1.7 plays a crucial role in controlling the excitability and action potential propagation from nociceptor neurons, thereby contributing to the sensory perception of pain. In Oryctolagus cuniculus (Rabbit), this protein is Sodium channel protein type 9 subunit alpha.